We begin with the raw amino-acid sequence, 87 residues long: Large ribosomal subunit protein bL31B (87 aa).

The protein belongs to the bacterial ribosomal protein bL31 family. Type B subfamily. In terms of assembly, part of the 50S ribosomal subunit.

The chain is Large ribosomal subunit protein bL31B from Escherichia coli O9:H4 (strain HS).